Consider the following 197-residue polypeptide: Small ribosomal subunit protein uS4c (197 aa).

Residues 82–143 enclose the S4 RNA-binding domain; that stretch reads MRLDNILFRL…KQRSKALIQN (62 aa).

Belongs to the universal ribosomal protein uS4 family. In terms of assembly, part of the 30S ribosomal subunit. Contacts protein S5. The interaction surface between S4 and S5 is involved in control of translational fidelity.

The protein resides in the plastid. The protein localises to the chloroplast. Functionally, one of the primary rRNA binding proteins, it binds directly to 16S rRNA where it nucleates assembly of the body of the 30S subunit. Its function is as follows. With S5 and S12 plays an important role in translational accuracy. The sequence is that of Small ribosomal subunit protein uS4c (rps4) from Gladiolus papilio (Goldblotch gladiolus).